A 394-amino-acid chain; its full sequence is Dual-specificity RNA methyltransferase RlmN (394 aa).

Catalysis depends on glutamate 115, which acts as the Proton acceptor. Positions 121-363 (DEGRGTLCVS…SPIRTPRGED (243 aa)) constitute a Radical SAM core domain. Cysteines 128 and 368 form a disulfide. Residues cysteine 135, cysteine 139, and cysteine 142 each contribute to the [4Fe-4S] cluster site. Residues 194-195 (GE), serine 226, 248-250 (SFH), and asparagine 325 contribute to the S-adenosyl-L-methionine site. The S-methylcysteine intermediate role is filled by cysteine 368.

The protein belongs to the radical SAM superfamily. RlmN family. [4Fe-4S] cluster is required as a cofactor.

It localises to the cytoplasm. It catalyses the reaction adenosine(2503) in 23S rRNA + 2 reduced [2Fe-2S]-[ferredoxin] + 2 S-adenosyl-L-methionine = 2-methyladenosine(2503) in 23S rRNA + 5'-deoxyadenosine + L-methionine + 2 oxidized [2Fe-2S]-[ferredoxin] + S-adenosyl-L-homocysteine. The enzyme catalyses adenosine(37) in tRNA + 2 reduced [2Fe-2S]-[ferredoxin] + 2 S-adenosyl-L-methionine = 2-methyladenosine(37) in tRNA + 5'-deoxyadenosine + L-methionine + 2 oxidized [2Fe-2S]-[ferredoxin] + S-adenosyl-L-homocysteine. Specifically methylates position 2 of adenine 2503 in 23S rRNA and position 2 of adenine 37 in tRNAs. m2A2503 modification seems to play a crucial role in the proofreading step occurring at the peptidyl transferase center and thus would serve to optimize ribosomal fidelity. This Roseobacter denitrificans (strain ATCC 33942 / OCh 114) (Erythrobacter sp. (strain OCh 114)) protein is Dual-specificity RNA methyltransferase RlmN.